A 571-amino-acid polypeptide reads, in one-letter code: Calcium-dependent protein kinase 16 (571 aa).

The segment at 1–74 (MGLCFSSAAK…TRHTPPHGKV (74 aa)) is disordered. A lipid anchor (N-myristoyl glycine) is attached at Gly2. Cys4 is lipidated: S-palmitoyl cysteine. Positions 63-72 (TPTRHTPPHG) are enriched in basic residues. In terms of domain architecture, Protein kinase spans 108-368 (YTIGKLLGHG…AAQALSHPWV (261 aa)). ATP contacts are provided by residues 114-122 (LGHGQFGYT) and Lys137. Asp234 (proton acceptor) is an active-site residue. At Ser274 the chain carries Phosphoserine. The autoinhibitory domain stretch occupies residues 374-404 (ASEIPIDISVLNNMRQFVKFSRLKQFALRAL). EF-hand domains lie at 411-446 (EELA…DHPW), 448-483 (LKDA…VNQL), 490-525 (KWQQ…KGSI), and 528-555 (LLEE…ASIK). Ca(2+) is bound by residues Asp424, Asp426, Asn428, Glu435, Asp461, Asn463, Asp465, Glu472, Asp503, Asp505, Asp507, Glu514, Asp533, Asp535, Asp537, and Lys539. Ser541 is modified (phosphoserine). Residue Glu544 participates in Ca(2+) binding.

This sequence belongs to the protein kinase superfamily. Ser/Thr protein kinase family. CDPK subfamily.

The protein resides in the cell membrane. It is found in the nucleus. It catalyses the reaction L-seryl-[protein] + ATP = O-phospho-L-seryl-[protein] + ADP + H(+). The catalysed reaction is L-threonyl-[protein] + ATP = O-phospho-L-threonyl-[protein] + ADP + H(+). Activated by calcium. Autophosphorylation may play an important role in the regulation of the kinase activity. May play a role in signal transduction pathways that involve calcium as a second messenger. This is Calcium-dependent protein kinase 16 (CPK16) from Arabidopsis thaliana (Mouse-ear cress).